Consider the following 190-residue polypeptide: Transcription antitermination protein NusB (190 aa).

A disordered region spans residues 158–190 (AGTSEDHVPQREPAAGQLGQDDSNGGQVAAVCR).

Belongs to the NusB family.

In terms of biological role, involved in transcription antitermination. Required for transcription of ribosomal RNA (rRNA) genes. Binds specifically to the boxA antiterminator sequence of the ribosomal RNA (rrn) operons. This Mycobacterium leprae (strain TN) protein is Transcription antitermination protein NusB.